Consider the following 120-residue polypeptide: Large ribosomal subunit protein uL18 (120 aa).

The disordered stretch occupies residues Met-1 to Asp-25. Residues Gln-10–Lys-21 show a composition bias toward basic residues.

This sequence belongs to the universal ribosomal protein uL18 family. Part of the 50S ribosomal subunit; part of the 5S rRNA/L5/L18/L25 subcomplex. Contacts the 5S and 23S rRNAs.

This is one of the proteins that bind and probably mediate the attachment of the 5S RNA into the large ribosomal subunit, where it forms part of the central protuberance. The sequence is that of Large ribosomal subunit protein uL18 from Thermosynechococcus vestitus (strain NIES-2133 / IAM M-273 / BP-1).